The primary structure comprises 368 residues: Peptidoglycan-recognition protein LA (368 aa).

Over 1-127 the chain is Cytoplasmic; sequence MFEENNSPTT…KSPSRRVTRN (127 aa). Disordered stretches follow at residues 21 to 46 and 101 to 122; these read QRASPAQRLHNLTSAGSSTSSSGLPL and INSNNANGNGNANRSRDKSPSR. Composition is skewed to low complexity over residues 33–43 and 102–113; these read TSAGSSTSSSG and NSNNANGNGNAN. The helical transmembrane segment at 128–148 threads the bilayer; sequence TILLITLILLVLATGLIVLYV. Residues 149–368 lie on the Extracellular side of the membrane; the sequence is ELNRPKPELP…MKTESWDAKQ (220 aa). A disulfide bond links Cys-221 and Cys-227. The 88-residue stretch at 233–320 folds into the N-acetylmuramoyl-L-alanine amidase domain; sequence TIQDSAIAEK…DVDYKLVAQN (88 aa). Residues Asn-273 and Asn-320 are each glycosylated (N-linked (GlcNAc...) asparagine).

It belongs to the N-acetylmuramoyl-L-alanine amidase 2 family. In terms of tissue distribution, expressed in uninduced hemocytes and mbn-2 cells.

It localises to the cell membrane. Peptidoglycan-recognition protein probably involved in innate immunity by binding to peptidoglycans (PGN) of bacteria and activating the immune response. The polypeptide is Peptidoglycan-recognition protein LA (PGRP-LA) (Drosophila melanogaster (Fruit fly)).